The chain runs to 188 residues: 3-deoxy-D-manno-octulosonate 8-phosphate phosphatase KdsC (188 aa).

Asp-32 and Asp-34 together coordinate Mg(2+). Residues Asp-34, 55 to 59 (NVRDG), Arg-63, Arg-78, Arg-86, and Lys-102 contribute to the substrate site. Residue Asp-125 participates in Mg(2+) binding.

Belongs to the KdsC family. As to quaternary structure, homotetramer. Mg(2+) serves as cofactor.

It carries out the reaction 3-deoxy-alpha-D-manno-2-octulosonate-8-phosphate + H2O = 3-deoxy-alpha-D-manno-oct-2-ulosonate + phosphate. Its pathway is carbohydrate biosynthesis; 3-deoxy-D-manno-octulosonate biosynthesis; 3-deoxy-D-manno-octulosonate from D-ribulose 5-phosphate: step 3/3. The protein operates within bacterial outer membrane biogenesis; lipopolysaccharide biosynthesis. Catalyzes the hydrolysis of 3-deoxy-D-manno-octulosonate 8-phosphate (KDO 8-P) to 3-deoxy-D-manno-octulosonate (KDO) and inorganic phosphate. The polypeptide is 3-deoxy-D-manno-octulosonate 8-phosphate phosphatase KdsC (Escherichia coli (strain K12)).